Consider the following 126-residue polypeptide: Probable 4-amino-4-deoxy-L-arabinose-phosphoundecaprenol flippase subunit ArnF (126 aa).

A helical transmembrane segment spans residues 1 to 21 (MGFFWALLSVGLVSAAQLLLR). The Periplasmic segment spans residues 22–47 (SAMVALPPLTDIVAFLQHLLHFQPGT). A helical membrane pass occupies residues 48 to 68 (FGLFFGLLGYLLSMVCWYFAL). The Cytoplasmic segment spans residues 69–76 (HRLPLSKA). A helical transmembrane segment spans residues 77–97 (YALLSLSYILVWAAAIWLPGW). Residues 98–100 (HEP) lie on the Periplasmic side of the membrane. The helical transmembrane segment at 101-121 (FYWQSLLGVAIIVAGVLTIFW) threads the bilayer. Over 122–126 (PVKRR) the chain is Cytoplasmic.

Belongs to the ArnF family. In terms of assembly, heterodimer of ArnE and ArnF.

Its subcellular location is the cell inner membrane. The protein operates within bacterial outer membrane biogenesis; lipopolysaccharide biosynthesis. Its function is as follows. Translocates 4-amino-4-deoxy-L-arabinose-phosphoundecaprenol (alpha-L-Ara4N-phosphoundecaprenol) from the cytoplasmic to the periplasmic side of the inner membrane. This is Probable 4-amino-4-deoxy-L-arabinose-phosphoundecaprenol flippase subunit ArnF from Klebsiella pneumoniae subsp. pneumoniae (strain ATCC 700721 / MGH 78578).